The chain runs to 409 residues: Salivary endonuclease (409 aa).

A signal peptide spans methionine 1–glycine 20. Asparagine 37 and asparagine 102 each carry an N-linked (GlcNAc...) asparagine glycan. Histidine 216 functions as the Proton acceptor in the catalytic mechanism. Asparagine 246 contributes to the Mg(2+) binding site. N-linked (GlcNAc...) asparagine glycans are attached at residues asparagine 351 and asparagine 381.

This sequence belongs to the DNA/RNA non-specific endonuclease family. Requires Mg(2+) as cofactor. Salivary gland.

Its subcellular location is the secreted. Functionally, hydrolyzes single-stranded and double-stranded DNA with little sequence specificity. Inhibits contact pathway of blood coagulation in the host by preventing activation of coagulation factor XII (F12) triggered by soluble DNA. Modestly up-regulates expression of CSF2, CXCL1 and CXCL8 in cultured human dermal microvascular endothelial cells. At higher doses promotes host neutrophil recruitment at the injection site in mouse model. (Microbial infection) Increases Leishmania major survival in the host by disrupting parasite-induced neutrophil extracellular traps. Exacerbates L.major parasite infectivity and increases cutaneous lesions in mouse model. This Lutzomyia longipalpis (Sand fly) protein is Salivary endonuclease.